The chain runs to 97 residues: Large ribosomal subunit protein eL21 (97 aa).

This sequence belongs to the eukaryotic ribosomal protein eL21 family.

The protein is Large ribosomal subunit protein eL21 of Methanosarcina barkeri (strain Fusaro / DSM 804).